Consider the following 122-residue polypeptide: Large ribosomal subunit protein bL12 (122 aa).

This sequence belongs to the bacterial ribosomal protein bL12 family. In terms of assembly, homodimer. Part of the ribosomal stalk of the 50S ribosomal subunit. Forms a multimeric L10(L12)X complex, where L10 forms an elongated spine to which 2 to 4 L12 dimers bind in a sequential fashion. Binds GTP-bound translation factors.

Functionally, forms part of the ribosomal stalk which helps the ribosome interact with GTP-bound translation factors. Is thus essential for accurate translation. The polypeptide is Large ribosomal subunit protein bL12 (Sulfurimonas denitrificans (strain ATCC 33889 / DSM 1251) (Thiomicrospira denitrificans (strain ATCC 33889 / DSM 1251))).